The following is a 275-amino-acid chain: MKGQILREMKVLKAIEPEFEIARRVAFIKAKLIEAHSKTLVLGISGGVDSSLAGRLCQLAVNSLNQEKSTDSYQFIAVRLPYHVQKDEHEAQLACQFIQPSKLVTVNIHDGVVGVHNATLAGLDAAGLTHDSTKADFIKGNVKARMRMIAQYDIAGLVGGLVVGTDHSAENITGFYTKWGDGACDLAPLFGLNKRQVRQLAAFLGAPQVLVVKAPTADLEENKPQLEDEVALGLSYDAIDDFLEGKPVSQAVEDKLVAIYLRTQHKRQPIATIYD.

Residue 43–50 participates in ATP binding; sequence GISGGVDS. Position 49 (Asp49) interacts with Mg(2+). A deamido-NAD(+)-binding site is contributed by Arg145. Thr165 serves as a coordination point for ATP. Glu170 is a binding site for Mg(2+). Deamido-NAD(+) contacts are provided by Lys178 and Asp185. 2 residues coordinate ATP: Lys194 and Thr216. 265-266 contributes to the deamido-NAD(+) binding site; sequence HK.

It belongs to the NAD synthetase family. Homodimer.

It carries out the reaction deamido-NAD(+) + NH4(+) + ATP = AMP + diphosphate + NAD(+) + H(+). It functions in the pathway cofactor biosynthesis; NAD(+) biosynthesis; NAD(+) from deamido-NAD(+) (ammonia route): step 1/1. Catalyzes the ATP-dependent amidation of deamido-NAD to form NAD. Uses ammonia as a nitrogen source. This is NH(3)-dependent NAD(+) synthetase from Shewanella denitrificans (strain OS217 / ATCC BAA-1090 / DSM 15013).